The primary structure comprises 273 residues: Transcriptional regulator ICP22 homolog (273 aa).

2 disordered regions span residues 1–57 (GSCR…YGLP) and 160–273 (YEQR…SARR). Positions 11-33 (PSTSPIIPSLSPSSGGNPSPRSS) are enriched in low complexity. Composition is skewed to acidic residues over residues 178-194 (EECEVSGDESPSEEEEA) and 204-224 (SPEEESASSDFESFSDEEDDS). The segment covering 261-273 (VPKGGRPAKSARR) has biased composition (low complexity).

It belongs to the herpesviridae ICP22 family.

The protein is Transcriptional regulator ICP22 homolog of Equus caballus (Horse).